Here is a 359-residue protein sequence, read N- to C-terminus: Serine hydrolase-like protein DDB_G0286239 (359 aa).

One can recognise an AB hydrolase-1 domain in the interval leucine 38 to glutamate 289. Serine 111 is a catalytic residue. Residues phenylalanine 310 to leucine 359 form a disordered region. Positions histidine 334–isoleucine 351 are enriched in polar residues.

The protein belongs to the AB hydrolase superfamily.

Its function is as follows. Probable serine hydrolase. The sequence is that of Serine hydrolase-like protein DDB_G0286239 from Dictyostelium discoideum (Social amoeba).